A 1010-amino-acid chain; its full sequence is ATP-dependent DNA/RNA helicase DHX36 (1010 aa).

Positions 1 to 54 (MSYDYHQNWGRDGGPRSSGGGYGGSYGGSHGGGHGGNRGSGGGGGGGGGRGGRG) are required for recruitment to cytoplasmic stress granules. The segment at 1-63 (MSYDYHQNWG…GRHPGHLKGR (63 aa)) is disordered. A required for the pre-miR-134 transport region spans residues 1–107 (MSYDYHQNWG…IVQLLHSVQT (107 aa)). The segment at 1-202 (MSYDYHQNWG…KKTDLRYIEM (202 aa)) is necessary for nuclear and nucleolar caps localizations. A compositionally biased stretch (gly residues) spans 16-51 (RSSGGGYGGSYGGSHGGGHGGNRGSGGGGGGGGGRG). Positions 56–78 (HPGHLKGREIGLWYAKKQGQKNK) are DSM (DHX36-specific motif). The segment at 56–108 (HPGHLKGREIGLWYAKKQGQKNKEAERQERAVVHMDERREEQIVQLLHSVQTK) is required for G4-DNA- and G4-RNA-binding. 2 recA-like domain regions span residues 109 to 388 (NDKD…MIHI) and 389 to 630 (PGFT…DYQL). Positions 219 to 389 (VNMIDNHQVT…FGNCPMIHIP (171 aa)) constitute a Helicase ATP-binding domain. An ATP-binding site is contributed by 235–240 (GCGKTT). Residues 267–319 (RRISAISVAERVAAERAESCGNGNSTGYQIRLQSRLPRKQGSILYCTTGIILQ) are necessary for interaction with single-stranded DNA at the 3'-end of the G4-DNA structure. The short motif at 336 to 339 (DEIH) is the DEAH box element. Positions 337 and 339 each coordinate Mg(2+). Residues 479 to 649 (ALIRYIVLEE…ELCLQIKILR (171 aa)) form the Helicase C-terminal domain. The interval 500 to 559 (WDNISTLHDLLMSQVMFKSDKFIIIPLHSLMPTVNQTQVFKRTPPGVRKIVIATNIAETS) is necessary for interaction with single-stranded DNA at the 3'-end of the G4-DNA structure. The short motif at 519-530 (DKFIIIPLHSLM) is the Nuclear localization signal element. Residues Ser559 and 604 to 607 (RAGR) contribute to the ATP site. The segment at 631–700 (PEILRTPLEE…LGVHLARLPV (70 aa)) is WH domain. 3 necessary for interaction with single-stranded DNA at the 3'-end of the G4-DNA structure regions span residues 640–699 (ELCL…ARLP), 851–862 (NLGKKRKMVKVY), and 872–902 (HPKS…IYLY). The segment at 843 to 907 (PKVAKIRLNL…SIYLYDCTEV (65 aa)) is OB-fold-like subdomains. Lys949 carries the post-translational modification N6-acetyllysine. At Ser965 the chain carries Phosphoserine.

Found in a multi-helicase-TICAM1 complex at least composed of DHX36, DDX1, DDX21 and TICAM1; this complex exists in resting cells with or without dsRNA poly(I:C) ligand stimulation. Interacts (via C-terminus) with TICAM1 (via TIR domain). Interacts (via C-terminus) with DDX21; this interaction serves as bridges to TICAM1. Interacts with TERT; this interaction is dependent on the ability of DHX36 to bind to the G-quadruplex RNA (G4-RNA) structure present in the telomerase RNA template component (TERC). Interacts with DKC1; this interaction is dependent on the ability of DHX36 to bind to the G4-RNA structure present in TERC. Interacts with PARN; this interaction stimulates PARN to enhance uPA mRNA decay. Interacts with EXOSC3; this interaction occurs in a RNase-insensitive manner. Interacts with EXOSC10; this interaction occurs in a RNase-insensitive manner. Interacts with ILF3; this interaction occurs in a RNA-dependent manner. Interacts with ELAVL1; this interaction occurs in an RNA-dependent manner. Interacts with DDX5; this interaction occurs in a RNA-dependent manner. Interacts with DDX17; this interaction occurs in a RNA-dependent manner. Interacts with HDAC1; this interaction occurs in a RNA-dependent manner. Interacts with HDAC3; this interaction occurs in a RNA-dependent manner. Interacts with HDAC4. Interacts with AGO1. Interacts with AGO2. Interacts with ERCC6. The cofactor is Mg(2+).

The protein localises to the nucleus. It localises to the cytoplasm. It is found in the cytosol. The protein resides in the stress granule. Its subcellular location is the nucleus speckle. The protein localises to the chromosome. It localises to the telomere. It is found in the mitochondrion. The protein resides in the perikaryon. Its subcellular location is the cell projection. The protein localises to the dendrite. It localises to the axon. The catalysed reaction is ATP + H2O = ADP + phosphate + H(+). Its activity is regulated as follows. ATPase activity is enhanced in the presence of homomeric poly(U) RNAs, but not by double-stranded DNA (dsDNA), double-stranded RNA (dsRNA) and tRNA. Functionally, multifunctional ATP-dependent helicase that unwinds G-quadruplex (G4) structures. Plays a role in many biological processes such as genomic integrity, gene expression regulations and as a sensor to initiate antiviral responses. G4 structures correspond to helical structures containing guanine tetrads. Binds with high affinity to and unwinds G4 structures that are formed in nucleic acids (G4-DNA and G4-RNA). Plays a role in genomic integrity. Converts the G4-RNA structure present in telomerase RNA template component (TREC) into a double-stranded RNA to promote P1 helix formation that acts as a template boundary ensuring accurate reverse transcription. Plays a role in transcriptional regulation. Resolves G4-DNA structures in promoters of genes, such as YY1, KIT/c-kit and ALPL and positively regulates their expression. Plays a role in post-transcriptional regulation. Unwinds a G4-RNA structure located in the 3'-UTR polyadenylation site of the pre-mRNA TP53 and stimulates TP53 pre-mRNA 3'-end processing in response to ultraviolet (UV)-induced DNA damage. Binds to the precursor-microRNA-134 (pre-miR-134) terminal loop and regulates its transport into the synapto-dendritic compartment. Involved in the pre-miR-134-dependent inhibition of target gene expression and the control of dendritic spine size. Plays a role in the regulation of cytoplasmic mRNA translation and mRNA stability. Binds to both G4-RNA structures and alternative non-quadruplex-forming sequence within the 3'-UTR of the PITX1 mRNA regulating negatively PITX1 protein expression. Binds to both G4-RNA structure in the 5'-UTR and AU-rich elements (AREs) localized in the 3'-UTR of NKX2-5 mRNA to either stimulate protein translation or induce mRNA decay in an ELAVL1-dependent manner, respectively. Also binds to ARE sequences present in several mRNAs mediating exosome-mediated 3'-5' mRNA degradation. Involved in cytoplasmic urokinase-type plasminogen activator (uPA) mRNA decay. Component of a multi-helicase-TICAM1 complex that acts as a cytoplasmic sensor of viral double-stranded RNA (dsRNA) and plays a role in the activation of a cascade of antiviral responses including the induction of pro-inflammatory cytokines via the adapter molecule TICAM1. Required for the early embryonic development and hematopoiesis. Involved in the regulation of cardioblast differentiation and proliferation during heart development. Involved in spermatogonia differentiation. May play a role in ossification. This is ATP-dependent DNA/RNA helicase DHX36 from Bos taurus (Bovine).